The chain runs to 244 residues: MSSVAIIAASGVGKRMNLRNGLSKQFLEIGGYPVIYHTLAAFQRASSIDKIYIATKPDSIATLETLAEEHQFSKINAIIAGGKERQDSISNCIELIALHIEKAEIDRPDTILVHDGARPFITPDEIDQIAQLSHHYGACVPATKPKDTIKYISDQPGFFGETLDRSLLLQVQTPQGFASEKLVEAHRKAREAESYATDDAALVEKFFPDQKIKVFEMGYHNIKITTPEDIFLGEAIYAQLQQQS.

The protein belongs to the IspD/TarI cytidylyltransferase family. IspD subfamily.

It catalyses the reaction 2-C-methyl-D-erythritol 4-phosphate + CTP + H(+) = 4-CDP-2-C-methyl-D-erythritol + diphosphate. It functions in the pathway isoprenoid biosynthesis; isopentenyl diphosphate biosynthesis via DXP pathway; isopentenyl diphosphate from 1-deoxy-D-xylulose 5-phosphate: step 2/6. Its function is as follows. Catalyzes the formation of 4-diphosphocytidyl-2-C-methyl-D-erythritol from CTP and 2-C-methyl-D-erythritol 4-phosphate (MEP). The polypeptide is 2-C-methyl-D-erythritol 4-phosphate cytidylyltransferase (Prosthecochloris aestuarii (strain DSM 271 / SK 413)).